Consider the following 704-residue polypeptide: ATPase synthesis protein 25, mitochondrial (704 aa).

Residues 1–59 (MSGIALQGIRCHACRNAAFRSFAAISGLSSSIRRPQSSISYPGSKLYQRNVRTTGRRQF) constitute a mitochondrion transit peptide. Positions 57 to 72 (RQFSTLGSVKSQVDSD) are enriched in polar residues. The tract at residues 57 to 118 (RQFSTLGSVK…QELPPLPENP (62 aa)) is disordered. Basic and acidic residues predominate over residues 73 to 83 (LPTKTETKEDA).

It belongs to the ATP25 family.

It localises to the mitochondrion inner membrane. Functionally, probable mitochondrial mRNA stabilization factor. The sequence is that of ATPase synthesis protein 25, mitochondrial (ATP25) from Arthroderma benhamiae (strain ATCC MYA-4681 / CBS 112371) (Trichophyton mentagrophytes).